Here is a 171-residue protein sequence, read N- to C-terminus: uncharacterized protein (171 aa).

Disordered stretches follow at residues 1–41 and 114–147; these read MDAV…SKPK and DSLGNTASSSSMDPAKGVPSQSGPPEGLGLRPKR. The span at 27 to 38 shows a compositional bias: low complexity; it reads AQQQQGPSAQGS. A compositionally biased stretch (polar residues) spans 116–125; it reads LGNTASSSSM.

This is an uncharacterized protein from Mus musculus (Mouse).